The sequence spans 348 residues: MKPPARMVSPERRSDDVGDTALRPQQLSEFVGQQQARANLSIFIEAARKRGEALDHVLFVGPPGLGKTTLAQIVARELGVGFRATSGPVIAKAGDLAALLTNLEERDVLFIDEIHRLSPAVEEVLYPAMEDFQLDLIIGEGPAARSVKIDLAKFTLVGATTRAGLLTNPLRDRFGIPIRLNFYTVEELEGIVTRGARVLGVGMTADGANEIARRARGTPRIAGRLLRRVRDFASAANADAIDRAIADHALSALEVDAAGLDAMDRRYLTTIALNYGGGPVGVETMAAALSEPRDAIEDIIEPYLIQCGYLQRTPRGRLLTSHAFRHLGMAEPSRDASQFGLFGSEDDA.

A disordered region spans residues Met-1–Thr-20. The large ATPase domain (RuvB-L) stretch occupies residues Met-1 to Tyr-183. Residues Leu-22, Arg-23, Gly-64, Lys-67, Thr-68, Thr-69, Glu-130 to Phe-132, Arg-173, Tyr-183, and Arg-220 contribute to the ATP site. Thr-68 is a Mg(2+) binding site. Residues Thr-184–Glu-254 form a small ATPAse domain (RuvB-S) region. A head domain (RuvB-H) region spans residues Ala-257 to Ala-348. DNA-binding residues include Arg-293, Arg-312, and Arg-317.

The protein belongs to the RuvB family. In terms of assembly, homohexamer. Forms an RuvA(8)-RuvB(12)-Holliday junction (HJ) complex. HJ DNA is sandwiched between 2 RuvA tetramers; dsDNA enters through RuvA and exits via RuvB. An RuvB hexamer assembles on each DNA strand where it exits the tetramer. Each RuvB hexamer is contacted by two RuvA subunits (via domain III) on 2 adjacent RuvB subunits; this complex drives branch migration. In the full resolvosome a probable DNA-RuvA(4)-RuvB(12)-RuvC(2) complex forms which resolves the HJ.

It localises to the cytoplasm. It catalyses the reaction ATP + H2O = ADP + phosphate + H(+). In terms of biological role, the RuvA-RuvB-RuvC complex processes Holliday junction (HJ) DNA during genetic recombination and DNA repair, while the RuvA-RuvB complex plays an important role in the rescue of blocked DNA replication forks via replication fork reversal (RFR). RuvA specifically binds to HJ cruciform DNA, conferring on it an open structure. The RuvB hexamer acts as an ATP-dependent pump, pulling dsDNA into and through the RuvAB complex. RuvB forms 2 homohexamers on either side of HJ DNA bound by 1 or 2 RuvA tetramers; 4 subunits per hexamer contact DNA at a time. Coordinated motions by a converter formed by DNA-disengaged RuvB subunits stimulates ATP hydrolysis and nucleotide exchange. Immobilization of the converter enables RuvB to convert the ATP-contained energy into a lever motion, pulling 2 nucleotides of DNA out of the RuvA tetramer per ATP hydrolyzed, thus driving DNA branch migration. The RuvB motors rotate together with the DNA substrate, which together with the progressing nucleotide cycle form the mechanistic basis for DNA recombination by continuous HJ branch migration. Branch migration allows RuvC to scan DNA until it finds its consensus sequence, where it cleaves and resolves cruciform DNA. This Bradyrhizobium sp. (strain BTAi1 / ATCC BAA-1182) protein is Holliday junction branch migration complex subunit RuvB.